We begin with the raw amino-acid sequence, 575 residues long: V-type ATP synthase alpha chain (575 aa).

238–245 (GPFGAGKT) is a binding site for ATP.

It belongs to the ATPase alpha/beta chains family.

It catalyses the reaction ATP + H2O + 4 H(+)(in) = ADP + phosphate + 5 H(+)(out). Functionally, produces ATP from ADP in the presence of a proton gradient across the membrane. The V-type alpha chain is a catalytic subunit. This Borreliella afzelii (strain PKo) (Borrelia afzelii) protein is V-type ATP synthase alpha chain.